The chain runs to 583 residues: Aspartate--tRNA ligase (583 aa).

Position 174 (Glu174) interacts with L-aspartate. The interval 198 to 201 (QITK) is aspartate. Arg220 contacts L-aspartate. ATP-binding positions include 220–222 (RDE) and Gln229. His443 contributes to the L-aspartate binding site. Position 477 (Glu477) interacts with ATP. Arg484 is a binding site for L-aspartate. 529–532 (GLDR) lines the ATP pocket.

This sequence belongs to the class-II aminoacyl-tRNA synthetase family. Type 1 subfamily. In terms of assembly, homodimer.

Its subcellular location is the cytoplasm. The enzyme catalyses tRNA(Asp) + L-aspartate + ATP = L-aspartyl-tRNA(Asp) + AMP + diphosphate. Catalyzes the attachment of L-aspartate to tRNA(Asp) in a two-step reaction: L-aspartate is first activated by ATP to form Asp-AMP and then transferred to the acceptor end of tRNA(Asp). The protein is Aspartate--tRNA ligase of Streptococcus agalactiae serotype V (strain ATCC BAA-611 / 2603 V/R).